We begin with the raw amino-acid sequence, 302 residues long: Probable alpha-L-glutamate ligase (302 aa).

In terms of domain architecture, ATP-grasp spans 112-294; the sequence is LQLLLKAGIP…IAAEIIDYIE (183 aa). ATP-binding positions include Lys148, 185–186, Asp194, and 218–220; these read DF and RAN. Mg(2+)-binding residues include Asp255, Glu267, and Asn269. The Mn(2+) site is built by Asp255, Glu267, and Asn269.

It belongs to the RimK family. Mg(2+) serves as cofactor. It depends on Mn(2+) as a cofactor.

The protein is Probable alpha-L-glutamate ligase of Haemophilus influenzae (strain ATCC 51907 / DSM 11121 / KW20 / Rd).